The primary structure comprises 74 residues: UPF0346 protein PEPE_1063 (74 aa).

It belongs to the UPF0346 family.

The sequence is that of UPF0346 protein PEPE_1063 from Pediococcus pentosaceus (strain ATCC 25745 / CCUG 21536 / LMG 10740 / 183-1w).